The chain runs to 82 residues: Small ribosomal subunit protein bS18 (82 aa).

A disordered region spans residues 1 to 20; it reads MSEINQTVTRRPFHRRRKTC.

This sequence belongs to the bacterial ribosomal protein bS18 family. As to quaternary structure, part of the 30S ribosomal subunit. Forms a tight heterodimer with protein bS6.

Its function is as follows. Binds as a heterodimer with protein bS6 to the central domain of the 16S rRNA, where it helps stabilize the platform of the 30S subunit. This Bartonella quintana (strain Toulouse) (Rochalimaea quintana) protein is Small ribosomal subunit protein bS18.